The sequence spans 353 residues: Heterogeneous nuclear ribonucleoprotein D0 (353 aa).

The segment at methionine 1–threonine 89 is disordered. N-acetylserine is present on serine 2. Positions alanine 11–glycine 42 are enriched in low complexity. Residues serine 43–glycine 56 are compositionally biased toward gly residues. Residues glutamate 62–asparagine 71 are compositionally biased toward basic and acidic residues. Serine 69 bears the Phosphoserine mark. Residue lysine 70 forms a Glycyl lysine isopeptide (Lys-Gly) (interchain with G-Cter in SUMO2) linkage. Residues serine 78, serine 80, and serine 81 each carry the phosphoserine modification. Threonine 89 bears the Phosphothreonine mark. RRM domains are found at residues tryptophan 95 to glutamate 177 and lysine 180 to glutamate 259. Lysine 117 carries the N6-methyllysine modification. Residue threonine 125 is modified to Phosphothreonine. Lysine 127 is covalently cross-linked (Glycyl lysine isopeptide (Lys-Gly) (interchain with G-Cter in SUMO2)). Lysine 163 carries the N6-acetyllysine modification. Serine 188 carries the phosphoserine modification. The residue at position 191 (threonine 191) is a Phosphothreonine. Lysine 195 participates in a covalent cross-link: Glycyl lysine isopeptide (Lys-Gly) (interchain with G-Cter in SUMO2). Lysine 241 and lysine 249 each carry N6-acetyllysine. Serine 269 bears the Phosphoserine mark. An omega-N-methylarginine mark is found at arginine 270, arginine 276, arginine 278, and arginine 280. Arginine 343 is subject to Asymmetric dimethylarginine; alternate. Dimethylated arginine; alternate is present on arginine 343. At arginine 343 the chain carries Omega-N-methylarginine; alternate.

In terms of assembly, identified in a IGF2BP1-dependent mRNP granule complex containing untranslated mRNAs. Part of a complex associated with the FOS mCRD domain and consisting of PABPC1, PAIP1, CSDE1/UNR and SYNCRIP. Interacts with IGF2BP2. Interacts with GTPBP1. Interacts with EIF4G1; the interaction requires RNA. Interacts with EIF3B and RPS3. Post-translationally, methylated by PRMT1, in an insulin-dependent manner. The PRMT1-mediated methylation regulates its phosphorylation. In terms of processing, arg-343 is dimethylated, probably to asymmetric dimethylarginine.

The protein localises to the nucleus. The protein resides in the cytoplasm. Binds with high affinity to RNA molecules that contain AU-rich elements (AREs) found within the 3'-UTR of many proto-oncogenes and cytokine mRNAs. Also binds to double- and single-stranded DNA sequences in a specific manner and functions a transcription factor. Each of the RNA-binding domains specifically can bind solely to a single-stranded non-monotonous 5'-UUAG-3' sequence and also weaker to the single-stranded 5'-TTAGGG-3' telomeric DNA repeat. Binds RNA oligonucleotides with 5'-UUAGGG-3' repeats more tightly than the telomeric single-stranded DNA 5'-TTAGGG-3' repeats. Binding of RRM1 to DNA inhibits the formation of DNA quadruplex structure which may play a role in telomere elongation. May be involved in translationally coupled mRNA turnover. Implicated with other RNA-binding proteins in the cytoplasmic deadenylation/translational and decay interplay of the FOS mRNA mediated by the major coding-region determinant of instability (mCRD) domain. May play a role in the regulation of the rhythmic expression of circadian clock core genes. Directly binds to the 3'UTR of CRY1 mRNA and induces CRY1 rhythmic translation. May also be involved in the regulation of PER2 translation. This Rattus norvegicus (Rat) protein is Heterogeneous nuclear ribonucleoprotein D0 (Hnrnpd).